Consider the following 454-residue polypeptide: NEDD8-activating enzyme E1 catalytic subunit (454 aa).

Alanine 2 carries the post-translational modification N-acetylalanine. Residue 56-80 (GLGCELLKDLALSGFRNLEVIDMDR) participates in ATP binding. Cysteine 215 acts as the Glycyl thioester intermediate in catalysis.

It belongs to the ubiquitin-activating E1 family. UBA3 subfamily. Heterodimer of UBA3/ECR1 and AXR1. Interacts with NEDD8 and RCE1. Expressed in shoot, root and floral meristems, in vascular tissues of cotyledons and mature leaves, and in the stele of the root.

It is found in the nucleus. It carries out the reaction ATP + [NEDD8 protein] + [E1 NEDD8-activating enzyme]-L-cysteine = AMP + diphosphate + [E1 NEDD8-activating enzyme]-S-[NEDD8 protein]-yl-L-cysteine.. Its pathway is protein modification; protein neddylation. Its function is as follows. Catalytic subunit of the dimeric ECR1-AXR1 E1 enzyme. E1 activates NEDD8/RUB1 by first adenylating its C-terminal glycine residue with ATP, thereafter linking this residue to the side chain of the catalytic cysteine, yielding a NEDD8-ECR1 thioester and free AMP. E1 finally transfers NEDD8 to the catalytic cysteine of RCE1. The polypeptide is NEDD8-activating enzyme E1 catalytic subunit (ECR1) (Arabidopsis thaliana (Mouse-ear cress)).